The primary structure comprises 1444 residues: RNA-directed RNA polymerase P1 (1444 aa).

Positions 156–182 (SEEIQMDESQSDKRRRKKRMEKSRPVW) are disordered. The RdRp catalytic domain maps to 690–897 (LGVGFATLYQ…KTVISHISGE (208 aa)).

Belongs to the reoviridae RNA-directed RNA polymerase family.

It is found in the virion. The protein localises to the host cytoplasm. It catalyses the reaction RNA(n) + a ribonucleoside 5'-triphosphate = RNA(n+1) + diphosphate. In terms of biological role, RNA-directed RNA polymerase that is involved in both transcription and genome replication. Together with the capping enzyme P5 and protein P7, forms an enzyme complex positioned near the channels situated at each of the five-fold vertices of the core. This is RNA-directed RNA polymerase P1 (S1) from Rice dwarf virus (isolate Fujian) (RDV).